A 502-amino-acid polypeptide reads, in one-letter code: Putative F-box/FBD/LRR-repeat protein At5g22610 (502 aa).

The region spanning 17-63 (EDLISKLPEVLLSQILSYLPTKDIVRTSVLSKRWKSVWLLIPGLDLD) is the F-box domain. 7 LRR repeats span residues 70 to 98 (YDTFVDFMNEFLFFSREENPCLHKLKLSI), 99 to 127 (QKNENDPSCVTLWTDCVARGKLQHLDVEF), 147 to 180 (CKTLLHLRLYRVLLGNFDQSVDSLPSLKSMCLEE), 181 to 206 (NVYSNEASLESLISSCRVLEDLTIVK), 208 to 228 (DDNVRFLRVHSQSLTSLSVGY), 238 to 263 (YYYDRDRGNSGLVIDAPRLKYLTFNN), and 344 to 373 (SVWLSSFDFLDILPKLLESCPNLKSIVLET). Residues 384-435 (VERRVSSVPECLLSSLEFVEIKNRISVDDGALEVARYFVENSVNLQKVVLRL) form the FBD domain.

The polypeptide is Putative F-box/FBD/LRR-repeat protein At5g22610 (Arabidopsis thaliana (Mouse-ear cress)).